Reading from the N-terminus, the 348-residue chain is Keratocan (348 aa).

The N-terminal stretch at 1 to 26 (MSRLNLTMEVLLVAFVAVFLTSQVHS) is a signal peptide. The LRRNT domain occupies 40–69 (ACPKECNCPPNFPNAVYCDNKGLKSIPVIP). Intrachain disulfides connect Cys41–Cys47 and Cys45–Cys57. LRR repeat units lie at residues 70-92 (PYTW…ALRN), 93-118 (ATQL…ALRA), 119-140 (MSNL…SPLP), 141-163 (AKLE…VFSG), 165-189 (GHLT…SLKG), 190-213 (LNNL…LPPT), 215-234 (TQIF…YFKG), 235-260 (LPKV…VFNL), 262-280 (SILD…PVIS), and 281-303 (SGLE…DICP). N-linked (GlcNAc...) (keratan sulfate) asparagine glycosylation is present at Asn92. An N-linked (GlcNAc...) (keratan sulfate) asparagine glycan is attached at Asn259. Asn297 carries an N-linked (GlcNAc...) asparagine glycan. A disulfide bond links Cys302 and Cys339.

Belongs to the small leucine-rich proteoglycan (SLRP) family. SLRP class II subfamily. Post-translationally, glycosylated. Contains keratan sulfate chains. Expressed in eye, where it is found in the corneal epithelial layer and to a lesser extent in the stromal layer (at protein level).

It localises to the secreted. Its subcellular location is the extracellular space. The protein localises to the extracellular matrix. May be important in developing and maintaining corneal transparency and for the structure of the stromal matrix. This chain is Keratocan, found in Danio rerio (Zebrafish).